We begin with the raw amino-acid sequence, 713 residues long: MFLSLVVYLSKICRYLSMFSSDRLTVPEYVSSRLHNRRTAPDPRAVSPGISTDVQAVLDGSLPALRSAIRTLRSSKDTGDLEETRRAIAETFQLVEEAWVLPTVGRRVAEEICNRIRLDGGLELLLQLMQTPAVEITYESAKLLEQILVSENRDYVARMGLGVILNLTREQEDAQLARSVSGILEHMFKHTEETSAQLITNGALDTILYWCRGTDPTVLRHCAVALSNCAMYGGHRCQRLMIEKQAAEWLFPLAFSKEDELIRFHACLAVAVLAANREMEKEVVKSGTLELVEPFIASLDPDEFARNMLDSADSMQGRTAADLQHLLPLLDGTRLEGKCIAAFYLCVETSIKSRQRNTKIFQEIGAVQSLKRIVMYSSNATVCSLAKRALKMMSEEVPRRILSSVPNWKSGEVQTWLQQIGFSAFSERFQELQVDGDLLLNITEQDLIQDLGMTSGLTRKRFLRDLRVLKTYANYSTCDPNNLADWLADADPRFRQYTYGLVQSGVDRNNIVHITDQQLLTDCHVENGIHRAKILSAARRPSKPCLTDSQPKGPDVFISYRRTTGSQLASLLKVHLQLRGFSVFIDVEKLEAGRFEEKLITSVQRARNFILVLSANALDKCMGDVAMKDWVHKEIVTALNGKKNIVPVTDNFVWPDPTSLPEDMSTILKFNGIKWSHEYQEATIEKILRFLEGCPSQEKPDGAKTDKKEPQKK.

The stretch at 53 to 96 (DVQAVLDGSLPALRSAIRTLRSSKDTGDLEETRRAIAETFQLVE) is one ARM 1 repeat. NAD(+)-binding positions include W99, R106, 145–153 (EQILVSENR), and 186–189 (HMFK). 7 ARM repeats span residues 110-149 (EEICNRIRLDGGLELLLQLMQTPAVEITYESAKLLEQILV), 151-189 (ENRDYVARMGLGVILNLTREQEDAQLARSVSGILEHMFK), 192-231 (EETSAQLITNGALDTILYWCRGTDPTVLRHCAVALSNCAM), 233-276 (GGHR…LAAN), 277-310 (REMEKEVVKSGTLELVEPFIASLDPDEFARNMLD), 311-350 (SADSMQGRTAADLQHLLPLLDGTRLEGKCIAAFYLCVETS), and 355-398 (QRNT…EEVP). SAM domains follow at residues 408–472 (WKSG…LKTY) and 478–537 (CDPN…ILSA). Positions 552-695 (KGPDVFISYR…KILRFLEGCP (144 aa)) constitute a TIR domain. Residues 561–562 (RR) and E591 each bind NAD(+). Residue E634 is part of the active site.

The protein belongs to the SARM1 family. In terms of assembly, homooctamer; forms an octameric ring via SAM domains.

The protein resides in the cytoplasm. Its subcellular location is the cell projection. It localises to the axon. The protein localises to the dendrite. It is found in the synapse. The protein resides in the mitochondrion. It catalyses the reaction NAD(+) + H2O = ADP-D-ribose + nicotinamide + H(+). The catalysed reaction is NAD(+) = cyclic ADP-beta-D-ribose + nicotinamide + H(+). It carries out the reaction NADP(+) + H2O = ADP-D-ribose 2'-phosphate + nicotinamide + H(+). With respect to regulation, autoinhibited: in the inactive state, the enzymatic TIR domain is held apart by the autoinhibiting ARM repeats. NAD(+)-binding to ARM repeats maintains an inactive state by promoting interaction between ARM repeats and the TIR domain, thereby facilitating inhibition of the enzymatic TIR domain. Following activation, possibly by nicotinamide mononucleotide (NMN), auto-inhibitory interactions are released, allowing self-association of the TIR domains and subsequent activation of the NAD(+) hydrolase (NADase) activity. Self-association of TIR domains is facilitated by the octamer of SAM domains. Functionally, NAD(+) hydrolase, which plays a key role in axonal degeneration following injury by regulating NAD(+) metabolism. Acts as a negative regulator of MYD88- and TRIF-dependent toll-like receptor signaling pathway by promoting Wallerian degeneration, an injury-induced form of programmed subcellular death which involves degeneration of an axon distal to the injury site. Wallerian degeneration is triggerred by NAD(+) depletion: in response to injury, SARM1 is activated and catalyzes cleavage of NAD(+) into ADP-D-ribose (ADPR), cyclic ADPR (cADPR) and nicotinamide; NAD(+) cleavage promoting cytoskeletal degradation and axon destruction. Also able to hydrolyze NADP(+), but not other NAD(+)-related molecules. Can activate neuronal cell death in response to stress. This chain is NAD(+) hydrolase SARM1, found in Danio rerio (Zebrafish).